The following is a 299-amino-acid chain: ATP phosphoribosyltransferase (299 aa).

The protein belongs to the ATP phosphoribosyltransferase family. Long subfamily. Equilibrium between an active dimeric form, an inactive hexameric form and higher aggregates. Interconversion between the various forms is largely reversible and is influenced by the natural substrates and inhibitors of the enzyme. Requires Mg(2+) as cofactor.

Its subcellular location is the cytoplasm. The enzyme catalyses 1-(5-phospho-beta-D-ribosyl)-ATP + diphosphate = 5-phospho-alpha-D-ribose 1-diphosphate + ATP. Its pathway is amino-acid biosynthesis; L-histidine biosynthesis; L-histidine from 5-phospho-alpha-D-ribose 1-diphosphate: step 1/9. Its activity is regulated as follows. Feedback inhibited by histidine. Its function is as follows. Catalyzes the condensation of ATP and 5-phosphoribose 1-diphosphate to form N'-(5'-phosphoribosyl)-ATP (PR-ATP). Has a crucial role in the pathway because the rate of histidine biosynthesis seems to be controlled primarily by regulation of HisG enzymatic activity. The polypeptide is ATP phosphoribosyltransferase (Salmonella dublin (strain CT_02021853)).